We begin with the raw amino-acid sequence, 205 residues long: Holliday junction branch migration complex subunit RuvA (205 aa).

The interval 1–64 (MIGKLKGVVD…EDQIRLFGFS (64 aa)) is domain I. The domain II stretch occupies residues 65-143 (SAAERDWFRL…GFSASEPLAA (79 aa)). Residues 144 to 152 (QLGGGGVAS) form a flexible linker region. Residues 153-205 (AQGGAAADAVSALVNLGYGVPQANAAIAAALRGAGEGAKTEVLIRLGLKELAK) are domain III.

The protein belongs to the RuvA family. Homotetramer. Forms an RuvA(8)-RuvB(12)-Holliday junction (HJ) complex. HJ DNA is sandwiched between 2 RuvA tetramers; dsDNA enters through RuvA and exits via RuvB. An RuvB hexamer assembles on each DNA strand where it exits the tetramer. Each RuvB hexamer is contacted by two RuvA subunits (via domain III) on 2 adjacent RuvB subunits; this complex drives branch migration. In the full resolvosome a probable DNA-RuvA(4)-RuvB(12)-RuvC(2) complex forms which resolves the HJ.

Its subcellular location is the cytoplasm. In terms of biological role, the RuvA-RuvB-RuvC complex processes Holliday junction (HJ) DNA during genetic recombination and DNA repair, while the RuvA-RuvB complex plays an important role in the rescue of blocked DNA replication forks via replication fork reversal (RFR). RuvA specifically binds to HJ cruciform DNA, conferring on it an open structure. The RuvB hexamer acts as an ATP-dependent pump, pulling dsDNA into and through the RuvAB complex. HJ branch migration allows RuvC to scan DNA until it finds its consensus sequence, where it cleaves and resolves the cruciform DNA. This Xanthobacter autotrophicus (strain ATCC BAA-1158 / Py2) protein is Holliday junction branch migration complex subunit RuvA.